Consider the following 321-residue polypeptide: Prephenate dehydratase (321 aa).

Positions 3–189 (RIAYLGPEGT…ARTRFVLVGR (187 aa)) constitute a Prephenate dehydratase domain. Positions 203-280 (SAVLRIDNQP…ADVRYLGSWP (78 aa)) constitute an ACT domain.

In terms of assembly, homodimer.

The enzyme catalyses prephenate + H(+) = 3-phenylpyruvate + CO2 + H2O. It functions in the pathway amino-acid biosynthesis; L-phenylalanine biosynthesis; phenylpyruvate from prephenate: step 1/1. The polypeptide is Prephenate dehydratase (pheA) (Mycobacterium bovis (strain ATCC BAA-935 / AF2122/97)).